The chain runs to 112 residues: uncharacterized protein (112 aa).

This is an uncharacterized protein from Escherichia coli.